We begin with the raw amino-acid sequence, 124 residues long: uncharacterized protein (124 aa).

The protein belongs to the YciI family.

This is an uncharacterized protein from Rhizobium meliloti (strain 1021) (Ensifer meliloti).